The following is a 237-amino-acid chain: Ribonuclease PH (237 aa).

Phosphate-binding positions include Arg86 and 124 to 126 (GTR).

It belongs to the RNase PH family. As to quaternary structure, homohexameric ring arranged as a trimer of dimers.

The catalysed reaction is tRNA(n+1) + phosphate = tRNA(n) + a ribonucleoside 5'-diphosphate. Functionally, phosphorolytic 3'-5' exoribonuclease that plays an important role in tRNA 3'-end maturation. Removes nucleotide residues following the 3'-CCA terminus of tRNAs; can also add nucleotides to the ends of RNA molecules by using nucleoside diphosphates as substrates, but this may not be physiologically important. Probably plays a role in initiation of 16S rRNA degradation (leading to ribosome degradation) during starvation. The sequence is that of Ribonuclease PH from Cereibacter sphaeroides (strain ATCC 17025 / ATH 2.4.3) (Rhodobacter sphaeroides).